The primary structure comprises 237 residues: Platelet-aggregating proteinase PA-BJ (237 aa).

Positions 1–5 (NSLVI) are excised as a propeptide. Residues 6–229 (VVGGRPCKIN…YLPWIESIIA (224 aa)) enclose the Peptidase S1 domain. 6 disulfide bridges follow: Cys12-Cys144, Cys31-Cys47, Cys79-Cys236, Cys123-Cys191, Cys155-Cys170, and Cys181-Cys205. Asn25 carries N-linked (GlcNAc...) asparagine glycosylation. Ser28 is a glycosylation site (O-linked (GalNAc...) serine). Active-site charge relay system residues include His46 and Asp91. Ser185 serves as the catalytic Charge relay system.

It belongs to the peptidase S1 family. Snake venom subfamily. Monomer. In terms of tissue distribution, expressed by the venom gland.

The protein localises to the secreted. With respect to regulation, inhibited by PMSF. The amidolytic activity is also inhibited by benzamidine derivatives. Its function is as follows. Snake venom serine protease that induces platelet aggregation through activation of protease-activated platelet receptors (PAR1/F2R and PAR4/F2RL3). On F2R, the cleavage occurs at Arg41-Ser42 (like thrombin cleavage), and Arg46-Asn47. In normal condition of hemostasis, the cleavage of the Arg41-Ser42 bond liberates a new N-terminus that functions as an agonist. However after envenomation, the cleavage of Arg46-Asn47 bond degrades this potential agonist. This may explain why the snake protease is less potent than thrombin in causing platelet aggregation and release reaction. On F2RL3, a thrombin-like activity has also been proven by calcium release from lung fibroblasts transfected with this receptor. Possesses amidolytic activities. The polypeptide is Platelet-aggregating proteinase PA-BJ (Bothrops jararaca (Jararaca)).